Reading from the N-terminus, the 500-residue chain is 4-aminobutyrate aminotransferase, mitochondrial (500 aa).

The transit peptide at 1–28 (MASMLLAQRLACSFQHSYRLLVPGSRHI) directs the protein to the mitochondrion. Residue C163 coordinates [2Fe-2S] cluster. 164 to 165 (GS) lines the pyridoxal 5'-phosphate pocket. C166 contacts [2Fe-2S] cluster. R220 is a substrate binding site. K231 bears the N6-succinyllysine mark. K252 carries the post-translational modification N6-acetyllysine; alternate. N6-succinyllysine; alternate is present on K252. An N6-acetyllysine mark is found at K279 and K318. K357 carries the post-translational modification N6-(pyridoxal phosphate)lysine. T381 contacts pyridoxal 5'-phosphate. K413 carries the N6-acetyllysine; alternate modification. Position 413 is an N6-succinyllysine; alternate (K413). 2 positions are modified to N6-acetyllysine: K452 and K470.

The protein belongs to the class-III pyridoxal-phosphate-dependent aminotransferase family. As to quaternary structure, homodimer; disulfide-linked. Pyridoxal 5'-phosphate is required as a cofactor. It depends on [2Fe-2S] cluster as a cofactor. As to expression, liver &gt; pancreas &gt; brain &gt; kidney &gt; heart &gt; placenta.

The protein localises to the mitochondrion matrix. It carries out the reaction 4-aminobutanoate + 2-oxoglutarate = succinate semialdehyde + L-glutamate. The catalysed reaction is (S)-3-amino-2-methylpropanoate + 2-oxoglutarate = 2-methyl-3-oxopropanoate + L-glutamate. Its function is as follows. Catalyzes the conversion of gamma-aminobutyrate and L-beta-aminoisobutyrate to succinate semialdehyde and methylmalonate semialdehyde, respectively. Can also convert delta-aminovalerate and beta-alanine. This is 4-aminobutyrate aminotransferase, mitochondrial from Homo sapiens (Human).